A 361-amino-acid polypeptide reads, in one-letter code: MTFDLKTEEGLLSYLTKHLSLDVAPNGVKRLSGGFVNVTWRVGLNAPYHGHTSIILKHAQPHLSSDIDFKIGVERSAYEYQALKIVSANSSLLGSSDIRVSVPEGLHYDVVNNALIMQDVGTMKTLLDYVTAKPPISAEIASLVGSQIGAFIARLHNLGRENKDKDDFKFFSGNIVGRTTADQLYQTIIPNAAKYGIDDPILPIVVKELVEEVMNSEETLIMADLWSGNILLQFDENSTELTRIWLVDWELCKYGPPSLDMGYFLGDCFLVARFQDQLVGTSMRQAYLKSYARNVKEPINYAKATAGIGAHLVMWTDFMKWGNDEEREEFVKKGVEAFHEANEDNRNGEITSILVKEASRT.

Residues Asn37, Lys57, and 118–120 (QDV) contribute to the ATP site. The active site involves Asp224. An ATP-binding site is contributed by 248-250 (DWE).

Belongs to the methylthioribose kinase family. Monomer. It depends on Mg(2+) as a cofactor.

The enzyme catalyses 4-hydroxytryptamine + ATP = norbaeocystin + ADP + H(+). The catalysed reaction is psilocin + ATP = psilocybin + ADP + H(+). It carries out the reaction 4-hydroxy-N,N,N-trimethyltryptamine + ATP = aeruginascin + ADP + H(+). It participates in secondary metabolite biosynthesis. Functionally, 4-hydroxytryptamine kinase; part of the gene cluster that mediates the biosynthesis of psilocybin, a psychotropic tryptamine-derived natural product. The first step in the pathway is the decarboxylation of L-tryptophan to tryptamine by the decarboxylase psiD. PsiD does not decarboxylate phenylalanine, tyrosine, or 5-hydroxy- L -tryptophan (5-HTP). 4-hydroxy-L-tryptophan is accepted as substrate by psiD as well. The cytochrome P450 monooxygenase psiH then converts tryptamine to 4-hydroxytryptamine. The kinase psiK catalyzes the 4-O-phosphorylation step by converting 4-hydroxytryptamine into norbaeocystin. The methyltransferase psiM then catalyzes iterative methyl transfer to the amino group of norbaeocystin to yield psilocybin via a monomethylated intermediate, baeocystin. 4-hydroxy-6-methyl-l-tryptophancan also be converted the decarboxylase PsiD, kinase PsiK, and methyltransferase PsiM into respectively 6-methyl-norbaeocystin, 6-methylbaeocystin, and 6-methylpsilocybin. PsiK kinase can also turn psilocin into psilocybin. This activity may represent a protective mechanism to rephosphorylate the unstable psilocin to the stable psilocybin in case of intracellular ester cleavage. Moreover, psiK is able to O-phosphorylate the quaternary amine 4-hydroxy-N,N,N-trimethyltryptamine (4-OH-TMT) to yield aeruginascin, another bioactive compound found in Psilocybe species. The protein is 4-hydroxytryptamine kinase of Psilocybe cyanescens.